Consider the following 399-residue polypeptide: MIITSLLDTDLYKFTMMQVVLHHFPAASVEYRFKCRTPGVDLVPYIDEIRAEVRSLCELRFTDSELDYLRRLRFVKSDFVDFLALFHLNEKYISITPSQKGGGEIDIEIKGPWLHTILFEIPVLAIVNEVYFRNTQRRPDYREGRGRLREKIKLLGAKPEFADCKIADYGTRRRFSKVWHEEVLRTLQDGLGPQFAGTSNVYYAMTHEITPLGTMAHEYLQACQALGPRLRDSQTYGLEMWAKEYRGDLGIALSDVYGMDAFLRDFDMYFCKLFDGARHDSGDPFDWGERLIKHYEENRCDPRTKVLVFSDALDIPKVMQLYARFRGRCKLAFGVGTNLTNDLGYQPLQIVIKMVRCNGQPVAKLSDSPGKSMCDDKAYLAYLRQVFGITQPPDDDAGK.

His-217 bears the Phosphohistidine; by autocatalysis mark.

This sequence belongs to the NAPRTase family. Post-translationally, transiently phosphorylated on a His residue during the reaction cycle. Phosphorylation strongly increases the affinity for substrates and increases the rate of nicotinate D-ribonucleotide production. Dephosphorylation regenerates the low-affinity form of the enzyme, leading to product release.

It catalyses the reaction nicotinate + 5-phospho-alpha-D-ribose 1-diphosphate + ATP + H2O = nicotinate beta-D-ribonucleotide + ADP + phosphate + diphosphate. It participates in cofactor biosynthesis; NAD(+) biosynthesis; nicotinate D-ribonucleotide from nicotinate: step 1/1. Catalyzes the synthesis of beta-nicotinate D-ribonucleotide from nicotinate and 5-phospho-D-ribose 1-phosphate at the expense of ATP. This is Nicotinate phosphoribosyltransferase from Burkholderia mallei (strain ATCC 23344).